The primary structure comprises 338 residues: Phenylalanine--tRNA ligase alpha subunit (338 aa).

Residue Glu252 participates in Mg(2+) binding.

Belongs to the class-II aminoacyl-tRNA synthetase family. Phe-tRNA synthetase alpha subunit type 1 subfamily. In terms of assembly, tetramer of two alpha and two beta subunits. Mg(2+) serves as cofactor.

The protein resides in the cytoplasm. The catalysed reaction is tRNA(Phe) + L-phenylalanine + ATP = L-phenylalanyl-tRNA(Phe) + AMP + diphosphate + H(+). This Fusobacterium nucleatum subsp. nucleatum (strain ATCC 25586 / DSM 15643 / BCRC 10681 / CIP 101130 / JCM 8532 / KCTC 2640 / LMG 13131 / VPI 4355) protein is Phenylalanine--tRNA ligase alpha subunit.